The primary structure comprises 303 residues: Acetaldehyde dehydrogenase (303 aa).

The active-site Acyl-thioester intermediate is the Cys-130. Residues 161–169 (SVGPGTRKN) and Asn-272 each bind NAD(+).

Belongs to the acetaldehyde dehydrogenase family.

The catalysed reaction is acetaldehyde + NAD(+) + CoA = acetyl-CoA + NADH + H(+). In Verminephrobacter eiseniae (strain EF01-2), this protein is Acetaldehyde dehydrogenase.